The chain runs to 288 residues: Protoheme IX farnesyltransferase (288 aa).

A run of 9 helical transmembrane segments spans residues 8-28 (IIKP…FLLA), 35-55 (VNLF…ASIF), 75-95 (IAIG…LLIL), 105-125 (FLTI…YSLL), 130-150 (SVYS…IGYC), 161-181 (FILL…IGLV), 205-225 (INII…FFAG), 230-250 (NYLF…IKGF), and 265-285 (IFLF…IDYK).

The protein belongs to the UbiA prenyltransferase family. Protoheme IX farnesyltransferase subfamily.

It localises to the cell membrane. It carries out the reaction heme b + (2E,6E)-farnesyl diphosphate + H2O = Fe(II)-heme o + diphosphate. It functions in the pathway porphyrin-containing compound metabolism; heme O biosynthesis; heme O from protoheme: step 1/1. Functionally, converts heme B (protoheme IX) to heme O by substitution of the vinyl group on carbon 2 of heme B porphyrin ring with a hydroxyethyl farnesyl side group. The protein is Protoheme IX farnesyltransferase of Wigglesworthia glossinidia brevipalpis.